Reading from the N-terminus, the 227-residue chain is tRNA pseudouridine synthase B (227 aa).

The active-site Nucleophile is the Asp42.

This sequence belongs to the pseudouridine synthase TruB family. Type 1 subfamily.

It catalyses the reaction uridine(55) in tRNA = pseudouridine(55) in tRNA. Its function is as follows. Responsible for synthesis of pseudouridine from uracil-55 in the psi GC loop of transfer RNAs. The sequence is that of tRNA pseudouridine synthase B from Ureaplasma parvum serovar 3 (strain ATCC 27815 / 27 / NCTC 11736).